We begin with the raw amino-acid sequence, 262 residues long: tRNA pseudouridine synthase A (262 aa).

The active-site Nucleophile is aspartate 52. Tyrosine 110 provides a ligand contact to substrate.

The protein belongs to the tRNA pseudouridine synthase TruA family. In terms of assembly, homodimer.

The enzyme catalyses uridine(38/39/40) in tRNA = pseudouridine(38/39/40) in tRNA. Its function is as follows. Formation of pseudouridine at positions 38, 39 and 40 in the anticodon stem and loop of transfer RNAs. The chain is tRNA pseudouridine synthase A from Hydrogenovibrio crunogenus (strain DSM 25203 / XCL-2) (Thiomicrospira crunogena).